The primary structure comprises 235 residues: Ribosomal RNA small subunit methyltransferase G (235 aa).

S-adenosyl-L-methionine-binding positions include G98, M103, 149–150, and R164; that span reads VE.

It belongs to the methyltransferase superfamily. RNA methyltransferase RsmG family.

It is found in the cytoplasm. The catalysed reaction is guanosine(527) in 16S rRNA + S-adenosyl-L-methionine = N(7)-methylguanosine(527) in 16S rRNA + S-adenosyl-L-homocysteine. Functionally, specifically methylates the N7 position of guanine in position 527 of 16S rRNA. The chain is Ribosomal RNA small subunit methyltransferase G from Cupriavidus metallidurans (strain ATCC 43123 / DSM 2839 / NBRC 102507 / CH34) (Ralstonia metallidurans).